A 447-amino-acid polypeptide reads, in one-letter code: N-succinylarginine dihydrolase (447 aa).

Residues 21–30 (AGLAHGNVAS), Asn112, and 139–140 (HR) each bind substrate. Glu176 is a catalytic residue. Position 215 (Arg215) interacts with substrate. His251 is a catalytic residue. 2 residues coordinate substrate: Asp253 and Asn364. The active-site Nucleophile is Cys370.

This sequence belongs to the succinylarginine dihydrolase family. In terms of assembly, homodimer.

It catalyses the reaction N(2)-succinyl-L-arginine + 2 H2O + 2 H(+) = N(2)-succinyl-L-ornithine + 2 NH4(+) + CO2. It participates in amino-acid degradation; L-arginine degradation via AST pathway; L-glutamate and succinate from L-arginine: step 2/5. Catalyzes the hydrolysis of N(2)-succinylarginine into N(2)-succinylornithine, ammonia and CO(2). The polypeptide is N-succinylarginine dihydrolase (Chromohalobacter salexigens (strain ATCC BAA-138 / DSM 3043 / CIP 106854 / NCIMB 13768 / 1H11)).